Here is a 281-residue protein sequence, read N- to C-terminus: Protein ZAR1-like 1.L (281 aa).

The segment at 183–267 (QKYGFFHCKN…QELCGRCKGQ (85 aa)) adopts a 3CxxC-type zinc-finger fold.

It belongs to the ZAR1 family. Component of a cytoplasmic ribonucleoprotein complex together with eif4enif1/4E-T and cpeb1. Expressed in oocytes.

It localises to the cytoplasm. The protein resides in the cytoplasmic ribonucleoprotein granule. Functionally, mRNA-binding protein required for maternal mRNA storage, translation and degradation during oocyte maturation. Controls timing of meiosis during oogenesis. Probably promotes formation of some phase-separated membraneless compartment that stores maternal mRNAs in oocytes: acts by undergoing liquid-liquid phase separation upon binding to maternal mRNAs. Binds to the 3'-UTR of maternal mRNAs, inhibiting their translation. In Xenopus laevis (African clawed frog), this protein is Protein ZAR1-like 1.L.